Reading from the N-terminus, the 55-residue chain is Ribosome biogenesis protein Nop10 (55 aa).

It belongs to the NOP10 family.

In terms of biological role, involved in ribosome biogenesis; more specifically in 18S rRNA pseudouridylation and in cleavage of pre-rRNA. The sequence is that of Ribosome biogenesis protein Nop10 from Methanosphaera stadtmanae (strain ATCC 43021 / DSM 3091 / JCM 11832 / MCB-3).